Reading from the N-terminus, the 1320-residue chain is Tetratricopeptide repeat protein 21A (1320 aa).

TPR repeat units follow at residues 4–38 (NDSS…FSND), 110–143 (GTAL…SRGF), 146–180 (AYVL…TKDV), 181–213 (LGLM…SGSF), 215–247 (PALV…DESN), 334–367 (VHVA…DKDG), 502–534 (IDPL…DPAS), 572–605 (PLYH…PALK), 728–761 (PHTS…NPHD), 762–795 (ASLA…NGQD), 797–828 (LCCD…DIVQ), 837–869 (VKCL…QSRI), 889–922 (ASIC…LPTD), 924–956 (KVML…EQNH), 957–990 (ETAS…APDN), 1028–1061 (PGFN…STWG), 1201–1234 (EKSW…NKSC), 1236–1268 (KAYE…SHHA), and 1270–1303 (PAIG…HPDY).

Belongs to the TTC21 family. As to quaternary structure, interacts with IFT20. Interacts with IFT52. Interacts with IFT140. Interacts with CEP78; regulating IFT20 stability and localization. As to expression, strongly expressed in testis.

Its function is as follows. Intraflagellar transport (IFT)-associated protein required for spermatogenesis. Required for sperm flagellar formation and intraflagellar transport. The sequence is that of Tetratricopeptide repeat protein 21A from Homo sapiens (Human).